Here is a 233-residue protein sequence, read N- to C-terminus: Probable GTP-binding protein EngB (233 aa).

The region spanning 31–205 is the EngB-type G domain; sequence TGVEIAFAGR…RRKLDTWFGP (175 aa). GTP is bound by residues 39–46, 66–70, 84–87, 151–154, and 184–186; these read GRSNAGKS, GRTQL, DLPG, TKAD, and FSS. Mg(2+) is bound by residues Ser-46 and Thr-68.

Belongs to the TRAFAC class TrmE-Era-EngA-EngB-Septin-like GTPase superfamily. EngB GTPase family. It depends on Mg(2+) as a cofactor.

Its function is as follows. Necessary for normal cell division and for the maintenance of normal septation. This chain is Probable GTP-binding protein EngB, found in Photobacterium profundum (strain SS9).